The following is a 438-amino-acid chain: Indole diterpene prenyltransferase paxD (438 aa).

Phenylalanine 80–methionine 81 is an L-tryptophan binding site. Substrate contacts are provided by arginine 102, lysine 190, arginine 264, lysine 266, tyrosine 268, tyrosine 349, and tyrosine 418.

Belongs to the tryptophan dimethylallyltransferase family.

It functions in the pathway secondary metabolite biosynthesis. In terms of biological role, indole diterpene prenyltransferase; part of the gene cluster that mediates the biosynthesis of paxilline, a mycotoxin that acts as an inhibitor of mammalian maxi-K channels. PaxG, the geranylgeranyl diphosphate (GGPP) synthase is proposed to catalyze the first step in paxilline biosynthesis. Condensation of indole-3-glycerol phosphate with GGPP by paxC then forms 3-geranylgeranylindole (3-GGI), followed by epoxidation and cyclization of this intermediate (by paxM and paxB) to form paspaline. Paspaline is subsequently converted to 13-desoxypaxilline by paxP, the latter being then converted to paxilline by paxQ. Finally paxilline can be mono- and di-prenylated by paxD. This Penicillium paxilli protein is Indole diterpene prenyltransferase paxD.